A 265-amino-acid polypeptide reads, in one-letter code: Hydroxyethylthiazole kinase 1 (265 aa).

M39 contacts substrate. K115 and T168 together coordinate ATP. Residue G195 coordinates substrate.

It belongs to the Thz kinase family. Mg(2+) serves as cofactor.

It carries out the reaction 5-(2-hydroxyethyl)-4-methylthiazole + ATP = 4-methyl-5-(2-phosphooxyethyl)-thiazole + ADP + H(+). Its pathway is cofactor biosynthesis; thiamine diphosphate biosynthesis; 4-methyl-5-(2-phosphoethyl)-thiazole from 5-(2-hydroxyethyl)-4-methylthiazole: step 1/1. Functionally, catalyzes the phosphorylation of the hydroxyl group of 4-methyl-5-beta-hydroxyethylthiazole (THZ). The protein is Hydroxyethylthiazole kinase 1 of Clostridium botulinum (strain Loch Maree / Type A3).